The following is a 229-amino-acid chain: ABC transporter I family member 1 (229 aa).

Positions 11–228 (LLLQNVSCMR…LIDMLDRADI (218 aa)) constitute an ABC transporter domain. An ATP-binding site is contributed by 43–50 (GTNGSGKS).

It belongs to the ABC transporter superfamily. ABCI family.

The protein resides in the membrane. The enzyme catalyses heme b(in) + ATP + H2O = heme b(out) + ADP + phosphate + H(+). Its function is as follows. Part of the ABC transporter complex CcmAB involved in the biogenesis of c-type cytochromes; once thought to export heme, this seems not to be the case, but its exact role is uncertain. Responsible for energy coupling to the transport system. This is ABC transporter I family member 1 (ABCI1) from Arabidopsis thaliana (Mouse-ear cress).